Reading from the N-terminus, the 513-residue chain is 5-aminolevulinate synthase, erythroid-specific, mitochondrial (513 aa).

The transit peptide at 1-18 (MAAFLRCPLLARHPPLAR) directs the protein to the mitochondrion. Succinyl-CoA is bound at residue R98. Pyridoxal 5'-phosphate contacts are provided by C190 and F191. Residues S212 and K231 each coordinate succinyl-CoA. The pyridoxal 5'-phosphate site is built by S264, H292, and T320. K323 is an active-site residue. K323 is modified (N6-(pyridoxal phosphate)lysine). Pyridoxal 5'-phosphate-binding residues include T352 and T353. T437 provides a ligand contact to succinyl-CoA.

The protein belongs to the class-II pyridoxal-phosphate-dependent aminotransferase family. As to quaternary structure, homodimer. Pyridoxal 5'-phosphate is required as a cofactor. In terms of tissue distribution, erythroid-specific.

The protein localises to the mitochondrion inner membrane. The catalysed reaction is succinyl-CoA + glycine + H(+) = 5-aminolevulinate + CO2 + CoA. It participates in porphyrin-containing compound metabolism; protoporphyrin-IX biosynthesis; 5-aminolevulinate from glycine: step 1/1. Functionally, catalyzes the pyridoxal 5'-phosphate (PLP)-dependent condensation of succinyl-CoA and glycine to form aminolevulinic acid (ALA), with CoA and CO2 as by-products. Contributes significantly to heme formation during erythropoiesis. This Gallus gallus (Chicken) protein is 5-aminolevulinate synthase, erythroid-specific, mitochondrial (ALAS2).